A 149-amino-acid polypeptide reads, in one-letter code: UPF0260 protein PFL_1499 (149 aa).

It belongs to the UPF0260 family.

The chain is UPF0260 protein PFL_1499 from Pseudomonas fluorescens (strain ATCC BAA-477 / NRRL B-23932 / Pf-5).